The sequence spans 193 residues: Bifunctional protein PyrR (193 aa).

Substrate is bound by residues 48–49, arginine 89, arginine 93, 110–118, arginine 143, and valine 167; these read TR and DDVLFSGRT. The PRPP-binding signature appears at 106 to 118; that stretch reads VVLVDDVLFSGRT.

This sequence belongs to the purine/pyrimidine phosphoribosyltransferase family. PyrR subfamily.

The catalysed reaction is UMP + diphosphate = 5-phospho-alpha-D-ribose 1-diphosphate + uracil. Functionally, regulates the transcription of the pyrimidine nucleotide (pyr) operon in response to exogenous pyrimidines. In terms of biological role, also displays a weak uracil phosphoribosyltransferase activity which is not physiologically significant. The chain is Bifunctional protein PyrR from Streptomyces coelicolor (strain ATCC BAA-471 / A3(2) / M145).